Reading from the N-terminus, the 885-residue chain is Leucine--tRNA ligase (885 aa).

The short motif at 46-56 is the 'HIGH' region element; the sequence is PYPSGALHMGH. The short motif at 638–642 is the 'KMSKS' region element; that stretch reads KMSKS. K641 is a binding site for ATP.

The protein belongs to the class-I aminoacyl-tRNA synthetase family.

Its subcellular location is the cytoplasm. The enzyme catalyses tRNA(Leu) + L-leucine + ATP = L-leucyl-tRNA(Leu) + AMP + diphosphate. The sequence is that of Leucine--tRNA ligase from Xanthomonas campestris pv. campestris (strain B100).